Here is a 423-residue protein sequence, read N- to C-terminus: AP-1 complex subunit mu-1 (423 aa).

Residue serine 2 is modified to N-acetylserine. Phosphothreonine is present on residues threonine 152, threonine 154, and threonine 223. An MHD domain is found at 168–421; the sequence is KNEVFLDVIE…ITQNGDYQLR (254 aa).

The protein belongs to the adaptor complexes medium subunit family. Adaptor protein complex 1 (AP-1) is a heterotetramer composed of two large adaptins (gamma-type subunit AP1G1 and beta-type subunit AP1B1), a medium adaptin (mu-type subunit AP1M1 or AP1M2) and a small adaptin (sigma-type subunit AP1S1 or AP1S2 or AP1S3). Interacts with MARCHF11. In terms of processing, phosphorylation of membrane-bound AP1M1/AP1M2 increases its affinity for sorting signals.

Its subcellular location is the cytoplasmic vesicle. It is found in the clathrin-coated vesicle membrane. It localises to the golgi apparatus. Subunit of clathrin-associated adaptor protein complex 1 that plays a role in protein sorting in the trans-Golgi network (TGN) and endosomes. The AP complexes mediate the recruitment of clathrin to membranes and the recognition of sorting signals within the cytosolic tails of transmembrane cargo molecules. This chain is AP-1 complex subunit mu-1, found in Bos taurus (Bovine).